A 75-amino-acid chain; its full sequence is High-potential iron-sulfur protein (75 aa).

Residues C38, C41, C54, and C68 each coordinate [4Fe-4S] cluster.

As to quaternary structure, homodimer. Monomer at different ionic strengths.

Its function is as follows. Specific class of high-redox-potential 4Fe-4S ferredoxins. Functions in anaerobic electron transport in most purple and in some other photosynthetic bacteria and in at least one genus (Paracoccus) of halophilic, denitrifying bacteria. Competent in photosynthetic electron transfer to oxidized cytochrome bc1 complex via the membrane-bound c-type tetraheme. The polypeptide is High-potential iron-sulfur protein (hip) (Rhodoferax fermentans).